We begin with the raw amino-acid sequence, 519 residues long: Putative cytochrome P450 CYP13A10 (519 aa).

Residues 3 to 23 (VILLAIPTLFIGFISYYLWIW) form a helical membrane-spanning segment. C465 contacts heme.

This sequence belongs to the cytochrome P450 family. Heme serves as cofactor.

The protein localises to the membrane. Functionally, cytochromes P450 are a group of heme-thiolate monooxygenases. They oxidize a variety of structurally unrelated compounds, including steroids, fatty acids, and xenobiotics. This Caenorhabditis elegans protein is Putative cytochrome P450 CYP13A10 (cyp-13A10).